The chain runs to 276 residues: 1H-3-hydroxy-4-oxoquinaldine 2,4-dioxygenase (276 aa).

In terms of domain architecture, AB hydrolase-1 spans 28-150 (PAILLLPGWC…TLLKDPERWR (123 aa)). Substrate contacts are provided by residues 36–38 (WCH), 100–101 (HS), and W160. H251 acts as the Proton donor/acceptor in catalysis.

This sequence belongs to the AB hydrolase superfamily. It depends on None. Contrary to most other dioxygenases, this enzyme does not require a cofactor for catalysis. as a cofactor.

It catalyses the reaction 3-hydroxy-2-methyl-1H-quinolin-4-one + O2 = N-acetylanthranilate + CO + H(+). Ring-cleaving dioxygenase involved in quinaldine degradation and utilization. This is 1H-3-hydroxy-4-oxoquinaldine 2,4-dioxygenase (hod) from Paenarthrobacter nitroguajacolicus (Arthrobacter nitroguajacolicus).